The following is a 129-amino-acid chain: uncharacterized protein (129 aa).

The tract at residues 1-129 (MGRMASPLRS…PARQSARMAR (129 aa)) is disordered. The span at 18–46 (ESTRHKETSTVRVETSSHREETSSHRVET) shows a compositional bias: basic and acidic residues. Residues 47 to 59 (SSRQVRTSSRQVE) are compositionally biased toward low complexity. Positions 70–97 (LTPSTKRLPQFLEVSSQHVETSSQCTET) are enriched in polar residues.

This is an uncharacterized protein from Mus musculus (Mouse).